A 196-amino-acid polypeptide reads, in one-letter code: NADH dehydrogenase [ubiquinone] 1 alpha subcomplex assembly factor 3 (196 aa).

The transit peptide at 1–93 directs the protein to the mitochondrion; that stretch reads MIARTLRTVG…RSVLSWNVNS (93 aa).

Belongs to the NDUFAF3 family. As to quaternary structure, together with NdufAF4 associates with mitochondrial complex I assembly intermediates during its biogenesis.

The protein localises to the mitochondrion. Its function is as follows. Involved in the assembly of mitochondrial NADH:ubiquinone oxidoreductase complex (complex I). Together with NdufAF4, involved in biogenesis of complex 1 modules N, Q and P-peripheral, but not the P-distal module. Required for recruitment of the complex I assembly factor Timmdc1 to complex 1 assembly intermediates. This is NADH dehydrogenase [ubiquinone] 1 alpha subcomplex assembly factor 3 from Drosophila melanogaster (Fruit fly).